The sequence spans 388 residues: Na(+)/H(+) antiporter NhaA (388 aa).

At 1–11 (MKHLHRFFSSD) the chain is on the cytoplasmic side. Residues 12–31 (ASGGIILIIAAVLAMIMANS) traverse the membrane as a helical segment. The Periplasmic segment spans residues 32-58 (GATSGWYHDFLETPVQLRVGTLEINKN). Residues 59–80 (MLLWINDALMAVFFLLVGLEVK) form a helical membrane-spanning segment. At 81–96 (RELMQGSLASLRQAAF) the chain is on the cytoplasmic side. The helical transmembrane segment at 97 to 116 (PVIAAIGGMIVPALLYLAFN) threads the bilayer. Over 117 to 122 (YADPIT) the chain is Periplasmic. A helical membrane pass occupies residues 123–130 (REGWAIPA). The Cytoplasmic segment spans residues 131 to 154 (ATDIAFALGVLALLGSRVPLALKI). Residues 155-176 (FLMALAIIDDLGAIIIIALFYT) form a helical membrane-spanning segment. The Periplasmic portion of the chain corresponds to 177–180 (NDLS). The helical transmembrane segment at 181 to 200 (MASLGVAAVAIAVLVVLNLC) threads the bilayer. At 201–204 (GVRR) the chain is on the cytoplasmic side. Residues 205 to 222 (TGVYILVGVVLWTAVLKS) form a helical membrane-spanning segment. Gly-223 is a topological domain (periplasmic). The chain crosses the membrane as a helical span at residues 224 to 236 (VHATLAGVIVGFF). Residues 237 to 253 (IPLKEKHGRSPAKRLEH) lie on the Cytoplasmic side of the membrane. Residues 254–272 (VLHPWVAYLILPLFAFANA) form a helical membrane-spanning segment. Topologically, residues 273-286 (GVSLQGVTLEGLTS) are periplasmic. Residues 287 to 310 (ILPLGIIAGLLIGKPLGISLFCWL) traverse the membrane as a helical segment. Over 311-339 (ALRLKLAHLPEGTTYQQIMAVGILCGIGF) the chain is Cytoplasmic. The helical transmembrane segment at 340-350 (TMSIFIASLAF) threads the bilayer. Residues 351 to 357 (GSVDPEL) lie on the Periplasmic side of the membrane. A helical membrane pass occupies residues 358–380 (INWAKLGILVGSISSAVIGYSWL). At 381-388 (RVRLRPSV) the chain is on the cytoplasmic side.

Belongs to the NhaA Na(+)/H(+) (TC 2.A.33) antiporter family.

Its subcellular location is the cell inner membrane. The enzyme catalyses Na(+)(in) + 2 H(+)(out) = Na(+)(out) + 2 H(+)(in). Its function is as follows. Na(+)/H(+) antiporter that extrudes sodium in exchange for external protons. In Escherichia coli O1:K1 / APEC, this protein is Na(+)/H(+) antiporter NhaA.